A 122-amino-acid chain; its full sequence is UPF0102 protein RL0336 (122 aa).

This sequence belongs to the UPF0102 family.

This chain is UPF0102 protein RL0336, found in Rhizobium johnstonii (strain DSM 114642 / LMG 32736 / 3841) (Rhizobium leguminosarum bv. viciae).